The primary structure comprises 225 residues: Protein GrpE (225 aa).

2 disordered regions span residues 1-44 (MTEE…ENAG) and 183-225 (VAVA…PDEG).

The protein belongs to the GrpE family. As to quaternary structure, homodimer.

It localises to the cytoplasm. Functionally, participates actively in the response to hyperosmotic and heat shock by preventing the aggregation of stress-denatured proteins, in association with DnaK and GrpE. It is the nucleotide exchange factor for DnaK and may function as a thermosensor. Unfolded proteins bind initially to DnaJ; upon interaction with the DnaJ-bound protein, DnaK hydrolyzes its bound ATP, resulting in the formation of a stable complex. GrpE releases ADP from DnaK; ATP binding to DnaK triggers the release of the substrate protein, thus completing the reaction cycle. Several rounds of ATP-dependent interactions between DnaJ, DnaK and GrpE are required for fully efficient folding. The chain is Protein GrpE from Streptomyces coelicolor (strain ATCC BAA-471 / A3(2) / M145).